Reading from the N-terminus, the 921-residue chain is Isoleucine--tRNA ligase (921 aa).

The 'HIGH' region signature appears at 57–67 (PYANGDIHMGH). E552 contributes to the L-isoleucyl-5'-AMP binding site. The short motif at 593–597 (KMSKS) is the 'KMSKS' region element. An ATP-binding site is contributed by K596. Residues C888, C891, C908, and C911 each coordinate Zn(2+).

The protein belongs to the class-I aminoacyl-tRNA synthetase family. IleS type 1 subfamily. In terms of assembly, monomer. The cofactor is Zn(2+).

The protein localises to the cytoplasm. It catalyses the reaction tRNA(Ile) + L-isoleucine + ATP = L-isoleucyl-tRNA(Ile) + AMP + diphosphate. Its function is as follows. Catalyzes the attachment of isoleucine to tRNA(Ile). As IleRS can inadvertently accommodate and process structurally similar amino acids such as valine, to avoid such errors it has two additional distinct tRNA(Ile)-dependent editing activities. One activity is designated as 'pretransfer' editing and involves the hydrolysis of activated Val-AMP. The other activity is designated 'posttransfer' editing and involves deacylation of mischarged Val-tRNA(Ile). This Bacillus cereus (strain AH820) protein is Isoleucine--tRNA ligase.